The primary structure comprises 451 residues: Cysteine desulfurase (451 aa).

Pyridoxal 5'-phosphate contacts are provided by alanine 121, threonine 122, glutamine 229, serine 249, and histidine 251. Lysine 252 carries the post-translational modification N6-(pyridoxal phosphate)lysine. Residue threonine 289 coordinates pyridoxal 5'-phosphate. Cysteine 375 (cysteine persulfide intermediate) is an active-site residue. Residue cysteine 375 coordinates [2Fe-2S] cluster. Cysteine 375 contacts Zn(2+). Cysteine 375 bears the Cysteine persulfide mark.

It belongs to the class-V pyridoxal-phosphate-dependent aminotransferase family. NifS/IscS subfamily. As to quaternary structure, homodimer. Component of the mitochondrial core iron-sulfur cluster (ISC) complex composed of NFS1, LYRM4, NDUFAB1, ISCU, FXN, and FDX2; this complex is a heterohexamer containing two copies of each monomer. Component of cyteine desulfurase complex composed of NFS1, LYRM4 and NDUFAB1; this complex contributes to the activation of cysteine desulfurase activity and NFS1 stabilization. Interacts (homodimer form) with ISCU (D-state); each monomer interacts with the C-terminal regions of each NFS1 monomer. Interacts with HSPA9. Interacts (via homodimer form) with FDX2. Interacts (via homodimer form) with FXN. Interacts with LYRM4. Component of a complex composed of FXN, NFS1, LYRM4 and ISCU. Monomer. Homodimer. Oligomer. Interacts with ISCU. Component of the cysteine desulfurase complex composed of NFS1 and LYRM4; this complex contributes to the activation of cysteine desulfurase activity. Interacts with MOCS3. It depends on pyridoxal 5'-phosphate as a cofactor. Post-translationally, N-gluconoylated. In terms of processing, cysteine persulfide intermediate is reduced by thiol-containing molecules like glutathione and L-cysteine. Persulfide reduction is a rate-limiting step of cysteine desulfurase catalytic cycle.

It localises to the mitochondrion. It is found in the cytoplasm. The protein localises to the nucleus. Its subcellular location is the cytoskeleton. The protein resides in the microtubule organizing center. It localises to the centrosome. The catalysed reaction is (sulfur carrier)-H + L-cysteine = (sulfur carrier)-SH + L-alanine. The enzyme catalyses L-cysteinyl-[cysteine desulfurase] + L-cysteine = S-sulfanyl-L-cysteinyl-[cysteine desulfurase] + L-alanine. With respect to regulation, active only in complex with LYRM4. In terms of biological role, cysteine desulfurase, of the core iron-sulfur cluster (ISC) assembly complex, that catalyzes the desulfuration of L-cysteine to L-alanine, as component of the cysteine desulfurase complex leading to the formation of a cysteine persulfide intermediate at the active site cysteine residue and participates in the [2Fe-2S] clusters assembly on the scaffolding protein ISCU. The persulfide is then transferred on the flexible Cys loop from the catalytic site of NFS1 to the surface of NFS1. After the NFS1-linked persulfide sulfur is transferred to one of the conserved Cys residues of the scaffold, a reaction assisted by FXN. The core iron-sulfur cluster (ISC) assembly complex is involved in the de novo synthesis of a [2Fe-2S] cluster, the first step of the mitochondrial iron-sulfur protein biogenesis. This process is initiated by the cysteine desulfurase complex (NFS1:LYRM4:NDUFAB1) that produces persulfide which is delivered on the scaffold protein ISCU in a FXN-dependent manner. Then this complex is stabilized by FDX2 which provides reducing equivalents to accomplish the [2Fe-2S] cluster assembly. Finally, the [2Fe-2S] cluster is transferred from ISCU to chaperone proteins, including HSCB, HSPA9 and GLRX5. Its function is as follows. May catalyze the desulfuration of L-cysteine to L-alanine as component of the cysteine desulfurase complex (NFS1:LYRM4), leading to the formation of a cysteine persulfide intermediate. Acts as a sulfur donor for MOCS3 by transferring the sulfur of the cysteine persulfide intermediate on MOCS3. The chain is Cysteine desulfurase from Rattus norvegicus (Rat).